Consider the following 321-residue polypeptide: Glycerol-3-phosphate phosphatase (321 aa).

The Nucleophile role is filled by Asp-34. Mg(2+) is bound by residues Asp-34, Asp-36, and Asp-260. The active-site Proton donor is Asp-36.

Belongs to the HAD-like hydrolase superfamily. CbbY/CbbZ/Gph/YieH family. Homodimer. The cofactor is Mg(2+). In terms of tissue distribution, expression was confirmed in liver, adipose tissue, testis and pancreatic islet.

The catalysed reaction is O-phospho-L-tyrosyl-[protein] + H2O = L-tyrosyl-[protein] + phosphate. The enzyme catalyses sn-glycerol 1-phosphate + H2O = glycerol + phosphate. It carries out the reaction sn-glycerol 3-phosphate + H2O = glycerol + phosphate. Its function is as follows. Glycerol-3-phosphate phosphatase hydrolyzing glycerol-3-phosphate into glycerol. Thereby, regulates the cellular levels of glycerol-3-phosphate a metabolic intermediate of glucose, lipid and energy metabolism. Was also shown to have a 2-phosphoglycolate phosphatase activity and a tyrosine-protein phosphatase activity. However, their physiological relevance is unclear. In vitro, also has a phosphatase activity toward ADP, ATP, GDP and GTP. In Rattus norvegicus (Rat), this protein is Glycerol-3-phosphate phosphatase.